Consider the following 359-residue polypeptide: 3-dehydroquinate synthase (359 aa).

NAD(+) is bound by residues aspartate 71–lysine 76, glycine 105–aspartate 109, threonine 129–threonine 130, lysine 142, lysine 151, and threonine 169–threonine 172. Zn(2+)-binding residues include glutamate 184, histidine 247, and histidine 264.

It belongs to the sugar phosphate cyclases superfamily. Dehydroquinate synthase family. Co(2+) is required as a cofactor. It depends on Zn(2+) as a cofactor. The cofactor is NAD(+).

It is found in the cytoplasm. The enzyme catalyses 7-phospho-2-dehydro-3-deoxy-D-arabino-heptonate = 3-dehydroquinate + phosphate. The protein operates within metabolic intermediate biosynthesis; chorismate biosynthesis; chorismate from D-erythrose 4-phosphate and phosphoenolpyruvate: step 2/7. Its function is as follows. Catalyzes the conversion of 3-deoxy-D-arabino-heptulosonate 7-phosphate (DAHP) to dehydroquinate (DHQ). The chain is 3-dehydroquinate synthase from Neisseria meningitidis serogroup C (strain 053442).